The chain runs to 194 residues: Putative manganese efflux pump MntP (194 aa).

The next 6 helical transmembrane spans lie at 2-22 (ISIIIQILLISVSVAMDAFAV), 43-63 (LWFGGFQMLFPILGYFAASTF), 67-87 (VTQFDHWIIFALLVFIGGNMV), 111-131 (PLAVACSIDAFAVGVSLAFMF), 137-157 (AFAILSIGVVTGLFSAAGLHI), and 174-194 (GVVLILLGIKVLLEHLGVIAF).

It belongs to the MntP (TC 9.B.29) family.

The protein localises to the cell membrane. Its function is as follows. Probably functions as a manganese efflux pump. In Bifidobacterium longum (strain DJO10A), this protein is Putative manganese efflux pump MntP.